A 430-amino-acid chain; its full sequence is Probable ribosomal RNA small subunit methyltransferase B (430 aa).

S-adenosyl-L-methionine contacts are provided by residues 246–252 (CAAPGSK), Asp270, Asp299, and Asp318. The Nucleophile role is filled by Cys371.

Belongs to the class I-like SAM-binding methyltransferase superfamily. RsmB/NOP family.

Its subcellular location is the cytoplasm. It carries out the reaction cytidine(967) in 16S rRNA + S-adenosyl-L-methionine = 5-methylcytidine(967) in 16S rRNA + S-adenosyl-L-homocysteine + H(+). Functionally, specifically methylates the cytosine at position 967 (m5C967) of 16S rRNA. The polypeptide is Probable ribosomal RNA small subunit methyltransferase B (Coxiella burnetii (strain RSA 493 / Nine Mile phase I)).